We begin with the raw amino-acid sequence, 304 residues long: Developmental pluripotency-associated protein 4 (304 aa).

Residues 1 to 11 show a composition bias toward polar residues; that stretch reads MLRGSASSTSM. 2 disordered regions span residues 1-84 and 147-176; these read MLRG…IPPL and KKLKVEKGETSLQSSETHPPEVALPPVGEP. The span at 12–29 shows a compositional bias: basic and acidic residues; it reads EKAKGKEWTSTEKSREED. Thr215 is modified (phosphothreonine). 2 positions are modified to phosphoserine: Ser221 and Ser226.

As to quaternary structure, interacts with DPPA2. Interacts with PCGF1.

It is found in the nucleus. Its function is as follows. May be involved in the maintenance of active epigenetic status of target genes. May inhibit differentiation of embryonic cells into a primitive ectoderm lineage. In Homo sapiens (Human), this protein is Developmental pluripotency-associated protein 4 (DPPA4).